Reading from the N-terminus, the 175-residue chain is Peptide deformylase (175 aa).

Residues Cys99 and His141 each contribute to the Fe cation site. Glu142 is an active-site residue. His145 lines the Fe cation pocket.

It belongs to the polypeptide deformylase family. It depends on Fe(2+) as a cofactor.

The enzyme catalyses N-terminal N-formyl-L-methionyl-[peptide] + H2O = N-terminal L-methionyl-[peptide] + formate. Removes the formyl group from the N-terminal Met of newly synthesized proteins. Requires at least a dipeptide for an efficient rate of reaction. N-terminal L-methionine is a prerequisite for activity but the enzyme has broad specificity at other positions. This is Peptide deformylase from Rickettsia prowazekii (strain Madrid E).